A 275-amino-acid chain; its full sequence is Lectin (275 aa).

The N-terminal stretch at 1-30 (MASLQTQMISFYLIFLSILLTTIFFFKVNS) is a signal peptide. D111 and G129 together coordinate D-glucose. Mn(2+) is bound by residues E149 and D151. D151, F153, N155, and D159 together coordinate Ca(2+). Residues D159 and H166 each coordinate Mn(2+). Positions 211–217 (NSLEEEN) are excised as a propeptide. D-glucose is bound by residues G246 and A247. Positions 270–275 (KQAADA) are excised as a propeptide.

This sequence belongs to the leguminous lectin family. As to quaternary structure, heterotetramer of two alpha and two beta chains. The mature form consists of two chains, alpha and beta, produced by cleavage of the immature protein. These remain cleaved, yet fold together to form one subunit.

Its function is as follows. D-mannose specific lectin. This Lens culinaris subsp. orientalis (Oriental wild lentil) protein is Lectin.